The sequence spans 31 residues: Protamine CIII (31 aa).

Residues 1–31 (MPRRRRASRPVRRRRRPRVSRRRRRGGRRRR) form a disordered region.

In terms of tissue distribution, testis.

It localises to the nucleus. The protein localises to the chromosome. Its function is as follows. Protamines substitute for histones in the chromatin of sperm during the haploid phase of spermatogenesis. They compact sperm DNA into a highly condensed, stable and inactive complex. The sequence is that of Protamine CIII from Oncorhynchus mykiss (Rainbow trout).